The following is a 213-amino-acid chain: Holliday junction branch migration complex subunit RuvA (213 aa).

Residues 1 to 63 (MISFLRGTVA…EDSMTLFGFA (63 aa)) form a domain I region. A domain II region spans residues 64-140 (DDDEREVFEV…LVPHGTAPAA (77 aa)). Positions 140–144 (AATTA) are flexible linker. The tract at residues 145–213 (AEASWKPQVV…RAGNRVGSRG (69 aa)) is domain III.

It belongs to the RuvA family. In terms of assembly, homotetramer. Forms an RuvA(8)-RuvB(12)-Holliday junction (HJ) complex. HJ DNA is sandwiched between 2 RuvA tetramers; dsDNA enters through RuvA and exits via RuvB. An RuvB hexamer assembles on each DNA strand where it exits the tetramer. Each RuvB hexamer is contacted by two RuvA subunits (via domain III) on 2 adjacent RuvB subunits; this complex drives branch migration. In the full resolvosome a probable DNA-RuvA(4)-RuvB(12)-RuvC(2) complex forms which resolves the HJ.

It localises to the cytoplasm. Its function is as follows. The RuvA-RuvB-RuvC complex processes Holliday junction (HJ) DNA during genetic recombination and DNA repair, while the RuvA-RuvB complex plays an important role in the rescue of blocked DNA replication forks via replication fork reversal (RFR). RuvA specifically binds to HJ cruciform DNA, conferring on it an open structure. The RuvB hexamer acts as an ATP-dependent pump, pulling dsDNA into and through the RuvAB complex. HJ branch migration allows RuvC to scan DNA until it finds its consensus sequence, where it cleaves and resolves the cruciform DNA. In Pseudarthrobacter chlorophenolicus (strain ATCC 700700 / DSM 12829 / CIP 107037 / JCM 12360 / KCTC 9906 / NCIMB 13794 / A6) (Arthrobacter chlorophenolicus), this protein is Holliday junction branch migration complex subunit RuvA.